Reading from the N-terminus, the 174-residue chain is uncharacterized protein (174 aa).

The region spanning Ser-42–Arg-174 is the N-acetyltransferase domain.

Belongs to the acetyltransferase family. Ycf52 subfamily.

The protein resides in the plastid. It localises to the chloroplast. This is an uncharacterized protein from Pyropia yezoensis (Susabi-nori).